The chain runs to 393 residues: Staphopain B (393 aa).

Residues 1–36 (MNSSCKTRVFNIISIIMVSMLILSLGAFANNNKAKA) form the signal peptide. Positions 37–219 (DSHSKQLEIN…KVEENEAIQE (183 aa)) are excised as a propeptide. Residues C243, H340, and N360 contribute to the active site.

Belongs to the peptidase C47 family. In terms of assembly, in the cytoplasm, prematurely activated/folded SspB forms a stable non-covalent complex with SspC. Proteolytically cleaved by staphylococcal serine protease (SspA).

The protein resides in the secreted. Prematurely activated/folded staphopain B is inhibited by staphostatin B (SspC), which is probably required to protect staphylococcal cytoplasmic proteins from degradation by SspB. Cysteine protease that plays an important role in the inhibition of host innate immune response. Degrades host elastin, fibrogen, fibronectin and kininogen. Blocks phagocytosis of opsonised S.aureus by neutrophils and monocytes by inducing their death in a proteolytic activity-dependent manner. Decreases surface expression of the 'don't eat me' signal CD31 on neutrophils. Cleaves host galectin-3/LGALS3, thereby inhibiting the neutrophil-activating ability of the lectin. This Staphylococcus aureus protein is Staphopain B (sspB).